A 528-amino-acid polypeptide reads, in one-letter code: MSLVKLYDTTLRDGTQAEDISFLVEDKIRIAHKLDEIGIHYIEGGWPGSNPKDVAFFKDIKKEKLSQAKIAAFGSTRRAKVTPDKDHNLKTLIQAEPDVCTIFGKTWDFHVHEALRISLEENLELIFDSLEYLKANVPEVFYDAEHFFDGYKANPDYAIKTLKAAQDAKADCIVLCDTNGGTMPFELVEIIREVRKHITAPLGIHTHNDSECAVANSLHAVSEGIVQVQGTINGFGERCGNANLCSIIPALKLKMKRECIGDDQLRKLRDLSRFVYELANLSPNKHQAYVGNSAFAHKGGVHVSAIQRHPETYEHLRPELVGNMTRVLVSDLSGRSNILAKAEEFNIKMDSKDPVTLEILENIKEMENRGYQFEGAEASFELLMKRALGTHRKFFSVIGFRVIDEKRHEDQKPLSEATIMVKVGGKIEHTAAEGNGPVNALDNALRKALEKFYPRLKEVKLLDYKVRVLPAGQGTASSIRVLIESGDKESRWGTVGVSENIVDASYQALLDSVEYKLHKSEEIEGSKK.

In terms of domain architecture, Pyruvate carboxyltransferase spans 4 to 266 (VKLYDTTLRD…RECIGDDQLR (263 aa)).

This sequence belongs to the alpha-IPM synthase/homocitrate synthase family.

It carries out the reaction pyruvate + acetyl-CoA + H2O = (3R)-citramalate + CoA + H(+). It participates in amino-acid biosynthesis; L-isoleucine biosynthesis; 2-oxobutanoate from pyruvate: step 1/3. Functionally, catalyzes the condensation of pyruvate and acetyl-coenzyme A to form (R)-citramalate. Makes part of the main pathway for isoleucine biosynthesis in G.sulfurreducens, i.e. the citramalate-dependent pathway. The sequence is that of (R)-citramalate synthase from Geobacter sulfurreducens (strain ATCC 51573 / DSM 12127 / PCA).